The primary structure comprises 283 residues: Putative aquaporin NIP4-1 (283 aa).

M1 carries the post-translational modification N-acetylmethionine. Transmembrane regions (helical) follow at residues 45–65 (LIAE…VVVV) and 70–90 (GGTI…MVMI). The NPA 1 signature appears at 102 to 104 (NPA). 3 helical membrane-spanning segments follow: residues 122–142 (LYIG…RLMF), 161–181 (ALVA…GVAT), and 189–209 (LAGI…GPIS). The NPA 2 signature appears at 214–216 (NPA). The helical transmembrane segment at 231–251 (IWVYIVGPVLGVISGGFVYNL) threads the bilayer. S267 is subject to Phosphoserine.

This sequence belongs to the MIP/aquaporin (TC 1.A.8) family. NIP (TC 1.A.8.12) subfamily.

The protein localises to the membrane. In terms of biological role, potential aquaporin, which may facilitate the transport of water and small neutral solutes across cell membranes. The protein is Putative aquaporin NIP4-1 (NIP4-1) of Arabidopsis thaliana (Mouse-ear cress).